The following is a 1383-amino-acid chain: WD repeat-containing protein dyf-2 (1383 aa).

WD repeat units follow at residues Glu32 to Leu71, Asn72 to Val112, Ser118 to Val157, Lys160 to Thr198, and Glu337 to Ser376. TPR repeat units follow at residues Glu756–Leu789, Pro810–Asn847, Arg885–Ala918, Pro940–Val973, Ile996–Phe1029, Leu1031–Gln1053, and Val1064–Val1097.

Component of the IFT complex A (IFT-A) composed of at least che-11, daf-10, dyf-2, ift-139, ift-43 and ifta-1. Expressed in ciliated sensory neurons.

The protein resides in the cell projection. It is found in the cilium. Its function is as follows. Component of the IFT complex A (IFT-A), a complex required for retrograde ciliary transport. Moves along the ciliary axoneme and is involved in the assembly, localization and the movement of other intraflagellar transport (IFT) proteins along the cilia axoneme. May also associate with the BBSome complex in order to mediate ciliary transport. Regulates cilia biogenesis, morphology and sensitivity to environmental cues. In Caenorhabditis elegans, this protein is WD repeat-containing protein dyf-2.